A 215-amino-acid chain; its full sequence is Vesicle-trafficking protein SEC22b-A (215 aa).

Residues Met-1 to Arg-190 are Cytoplasmic-facing. The Longin domain maps to Met-6–Ile-119. In terms of domain architecture, v-SNARE coiled-coil homology spans Asn-134 to Ala-194. A helical membrane pass occupies residues Ser-191–Trp-213. Residues Trp-214–Leu-215 are Lumenal-facing.

It belongs to the synaptobrevin family. In terms of assembly, component of 2 distinct SNARE complexes.

It localises to the endoplasmic reticulum membrane. It is found in the endoplasmic reticulum-Golgi intermediate compartment membrane. Its subcellular location is the golgi apparatus. The protein resides in the cis-Golgi network membrane. The protein localises to the trans-Golgi network membrane. It localises to the melanosome. SNARE involved in targeting and fusion of ER-derived transport vesicles with the Golgi complex as well as Golgi-derived retrograde transport vesicles with the ER. This Danio rerio (Zebrafish) protein is Vesicle-trafficking protein SEC22b-A.